We begin with the raw amino-acid sequence, 195 residues long: Thymidylate kinase (195 aa).

7–14 provides a ligand contact to ATP; the sequence is GIDGSGKT.

Belongs to the thymidylate kinase family.

It catalyses the reaction dTMP + ATP = dTDP + ADP. Its function is as follows. Phosphorylation of dTMP to form dTDP in both de novo and salvage pathways of dTTP synthesis. In Aquifex aeolicus (strain VF5), this protein is Thymidylate kinase (tmk).